The sequence spans 1362 residues: DNA-directed RNA polymerase subunit beta (1362 aa).

Belongs to the RNA polymerase beta chain family. In terms of assembly, the RNAP catalytic core consists of 2 alpha, 1 beta, 1 beta' and 1 omega subunit. When a sigma factor is associated with the core the holoenzyme is formed, which can initiate transcription.

It catalyses the reaction RNA(n) + a ribonucleoside 5'-triphosphate = RNA(n+1) + diphosphate. Its function is as follows. DNA-dependent RNA polymerase catalyzes the transcription of DNA into RNA using the four ribonucleoside triphosphates as substrates. The sequence is that of DNA-directed RNA polymerase subunit beta from Acinetobacter baylyi (strain ATCC 33305 / BD413 / ADP1).